Reading from the N-terminus, the 150-residue chain is Large ribosomal subunit protein uL11 (150 aa).

This sequence belongs to the universal ribosomal protein uL11 family. In terms of assembly, part of the ribosomal stalk of the 50S ribosomal subunit. Interacts with L10 and the large rRNA to form the base of the stalk. L10 forms an elongated spine to which L12 dimers bind in a sequential fashion forming a multimeric L10(L12)X complex. In terms of processing, one or more lysine residues are methylated.

Functionally, forms part of the ribosomal stalk which helps the ribosome interact with GTP-bound translation factors. This Cereibacter sphaeroides (strain ATCC 17025 / ATH 2.4.3) (Rhodobacter sphaeroides) protein is Large ribosomal subunit protein uL11.